The chain runs to 307 residues: MTVTINKSSVPHKVDFATPLSDVICHIKEDGAVIVRGFMDVETIQKLQEEVDTAVEKGSFGPRYQEYNEEAGEIPKHEIYKRGEGKKTKHMKNLALTSETFRNDVLNHKWMHAVCEQIYGEEFGDYWMNCAHILHLEPGEKAQFFHRDTGVYRVSDFRRRLNDPEFMINFLVSLTEFREDNGATQLIPGSHKWDAAHPPTFYGSDEAVPAILEPGDAVVYLGSLFHGAGENRSLDYRRGMIVSMHPAHFTPMESHFHLPKEIVESMTPLAQQMVGWRTMNNQNKIPIWQAGDDKIEDVLRLQHKEVY.

His-146, Asp-148, and His-226 together coordinate Fe cation.

Belongs to the PhyH family. Homodimer. Requires Fe cation as cofactor.

The catalysed reaction is verruculide A + 2-oxoglutarate + O2 = chrodrimanin T + succinate + CO2. It catalyses the reaction chrodrimanin E + 2-oxoglutarate + O2 = chrodrimanin A + succinate + CO2. The protein operates within secondary metabolite biosynthesis; terpenoid biosynthesis. Functionally, dioxygenase; part of the gene cluster that mediates the biosynthesis of chrodrimanin B, a meroterpenoid that acts as a potent blocker of insect GABA-gated chloride channels. The first step of the pathway is the biosynthesis of 6-hydroxymellein by the polyketide synthase cdmE. The prenyltransferase cdmH acts as a 6-hydroxymellein 5-farnesyltransferase and produces the hydrophobic metabolite verruculide C. The FAD-dependent monooxygenase cdmI further converts verruculide C into verruculide B. The terpene cyclase cdmG then produced the pentacyclic molecule 3-hydroxypentacecilide A, the backbone structure of chrodrimanin B, via folding the farnesyl moiety of the substrate into the chair-boat conformation. The short-chain dehydrogenase/reductase cdmF functions as the 3-OH dehydrogenase that oxidizes the C-3 hydroxyl group of 3-hydroxypentacecilide A and produces chrodrimanin C, the dehydrogenated product of 3-hydroxypentacecilide A. The cytochrome P450 monooxygenase cdmJ then accepts both 3-hydroxypentacecilide A and chrodrimanin C and functions as a C-7-beta-hydroxylase to produce respectively chrodrimanin H and chrodrimanin F. The dioxygenase cdmA accepts chrodrimanin H to afford chrodrimanin E, which is further transformed to chrodrimanin A by the dioxygenase cdmD. CdmA can also accept chrodrimanin C as substrate to convert it into verruculide A, which is further converted into chrodrimanin T by cdmD. The last step of the biosynthesis is proposed to be performed by the acetyltransferase cdmC which acetylates chrodrimanin A to yield chrodrimanin B. The pathway may also lead to the production of additional shunt products, including chrodrimanins T and U. This chain is Dioxygenase cdmD, found in Talaromyces verruculosus (Penicillium verruculosum).